The primary structure comprises 419 residues: Synaptotagmin-2 (419 aa).

Residues 1–62 lie on the Vesicular side of the membrane; it reads MRNIFKRNQE…NEINKIPLPP (62 aa). The interval 16-39 is disordered; the sequence is ATTTATMPIGPVDNSTESGGAGES. The N-linked (GlcNAc...) asparagine glycan is linked to asparagine 29. The chain crosses the membrane as a helical span at residues 63-83; that stretch reads WALIAIAVVAGLLLLTCCFCI. The Cytoplasmic segment spans residues 84–419; it reads CKKCCCKKKK…EVDALLGKNK (336 aa). The segment at 99–138 is disordered; the sequence is GKGMKNAMNMKDMKGGQDDDDAETGLTEGEGEGEEEKEPE. Residues 116 to 136 show a composition bias toward acidic residues; that stretch reads DDDDAETGLTEGEGEGEEEKE. 2 positions are modified to phosphothreonine: threonine 122 and threonine 125. The tract at residues 133–379 is phospholipid binding; it reads EEKEPENLGK…AIGKIFVGSN (247 aa). C2 domains lie at 139–258 and 270–403; these read NLGK…EEWR and KLGD…AQWH. Ca(2+) is bound by residues leucine 169, aspartate 170, and aspartate 176. Threonine 199 carries the phosphothreonine modification. Tyrosine 227 carries the post-translational modification Phosphotyrosine. Positions 228, 229, 230, 233, 234, 236, 301, 307, 361, and 363 each coordinate Ca(2+). Residue threonine 383 is modified to Phosphothreonine.

This sequence belongs to the synaptotagmin family. As to quaternary structure, homotetramer. Heterodimer; heterodimerizes with SYT1 in presence of calcium. Interacts with STON2. Interacts with SCAMP5. Interacts with PRRT2. Ca(2+) serves as cofactor. Phosphorylation at Thr-199 by WNK1, changes the calcium requirement for SYT2-binding to phospholipid membranes. As to expression, expressed at the neuromuscular junction. Expressed in melanocytes.

It localises to the cytoplasmic vesicle. The protein localises to the secretory vesicle. Its subcellular location is the synaptic vesicle membrane. The protein resides in the chromaffin granule membrane. It is found in the cytoplasm. Its function is as follows. Exhibits calcium-dependent phospholipid and inositol polyphosphate binding properties. May have a regulatory role in the membrane interactions during trafficking of synaptic vesicles at the active zone of the synapse. Plays a role in dendrite formation by melanocytes. The chain is Synaptotagmin-2 from Homo sapiens (Human).